A 529-amino-acid chain; its full sequence is Zinc finger protein 572 (529 aa).

A disordered region spans residues 1 to 62 (MEQEKKLLVS…EWSKRHRPQH (62 aa)). Glycyl lysine isopeptide (Lys-Gly) (interchain with G-Cter in SUMO2) cross-links involve residues lysine 5 and lysine 6. Residues 26–35 (TGDTSMNNLE) show a composition bias toward polar residues. Positions 36–55 (TVHHNNSKADKLKEKPSEWS) are enriched in basic and acidic residues. 12 consecutive C2H2-type zinc fingers follow at residues 132 to 154 (YKCSECWKSFSNSSHLRTHQRTH), 160 to 182 (YKCSECAKCFCNSSHLIQHLRMH), 188 to 210 (YQCGECGKSFSNTSHLIIHERTH), 216 to 238 (YKCPECGKRFSSSSHLIQHHRSH), 244 to 266 (YECSVCGKGFSHSYVLIEHQRTH), 272 to 294 (YKCPDCGKSFSQSSSLIRHQRTH), 300 to 322 (YKCLECEKSFGCNSTLIKHQRIH), 328 to 350 (YQCPECGKNFSRSSNLITHQKMH), 384 to 406 (YRCCECGKSFGLSSHLIRHQRTH), 412 to 434 (YRCSECWKTFSQSSTLVIHQRTH), 440 to 462 (YKCPDCGESFSQSFNLIRHRRTH), and 468 to 490 (YKCTSCEKCFSRSAYLSQHRKIH).

The protein belongs to the krueppel C2H2-type zinc-finger protein family.

It localises to the nucleus. Functionally, may be involved in transcriptional regulation. This is Zinc finger protein 572 (ZNF572) from Homo sapiens (Human).